Here is a 2089-residue protein sequence, read N- to C-terminus: Mediator of DNA damage checkpoint protein 1 (2089 aa).

Acidic residues predominate over residues M1–Q19. Residues M1–E22 are disordered. Positions M1 to T150 are interaction with CHEK2. Positions E2–T220 are interaction with the MRN complex. A Phosphothreonine; by ATM modification is found at T4. Residues N54 to K105 enclose the FHA domain. S108 carries the phosphoserine modification. Residues L145–E568 are required for nuclear localization (NLS1). T146 is modified (phosphothreonine). S168 bears the Phosphoserine; by CK2 mark. Residue S176 is modified to Phosphoserine. Disordered stretches follow at residues R185 to S248, D261 to N280, and G286 to H317. A phosphoserine; by CK2 mark is found at S196 and S218. The residue at position 220 (T220) is a Phosphothreonine; by CK2. Residues D261–V274 show a composition bias toward basic and acidic residues. S299 carries the phosphoserine; by CK2 modification. A Phosphothreonine; by CK2 modification is found at T301. Residues D306–H317 are compositionally biased toward basic and acidic residues. Phosphoserine; by CK2 is present on S329. A Phosphothreonine; by CK2 modification is found at T331. S372 is modified (phosphoserine). Phosphoserine; by CK2 is present on S376. T378 is subject to Phosphothreonine; by CK2. S394 and S397 each carry phosphoserine. At S402 the chain carries Phosphoserine; by CK2. T404 is modified (phosphothreonine; by CK2). S411 carries the post-translational modification Phosphoserine. The residue at position 449 (T449) is a Phosphothreonine. Residue S453 is modified to Phosphoserine; by CK2. T455 is modified (phosphothreonine; by CK2). A disordered region spans residues R482–A515. S485, S495, S498, S504, S505, and S513 each carry phosphoserine. T523 is modified (phosphothreonine). Position 590 is a phosphoserine (S590). A Glycyl lysine isopeptide (Lys-Gly) (interchain with G-Cter in SUMO1); alternate cross-link involves residue K616. K616 participates in a covalent cross-link: Glycyl lysine isopeptide (Lys-Gly) (interchain with G-Cter in SUMO2); alternate. Disordered regions lie at residues D653–G689 and S780–N1887. Basic and acidic residues predominate over residues G671 to E685. Residues S780 and S793 each carry the phosphoserine modification. The residue at position 812 (K812) is an N6-acetyllysine. 4 stretches are compositionally biased toward basic and acidic residues: residues E819–T844, E851–K862, D868–V905, and A914–P951. S955 and S998 each carry phosphoserine. A compositionally biased stretch (polar residues) spans S955–P965. Positions K1016–Q1031 are enriched in basic and acidic residues. Phosphoserine is present on S1033. Residues P1040–K1051 are compositionally biased toward pro residues. Phosphoserine is present on residues S1068 and S1086. A compositionally biased stretch (basic residues) spans P1103–S1113. Over residues P1129–K1156 the composition is skewed to polar residues. The interaction with the PRKDC complex stretch occupies residues S1148–E1610. Position 1157 is a phosphothreonine (T1157). Residues Q1169–T1187 show a composition bias toward polar residues. A Phosphothreonine modification is found at T1198. The segment covering Q1210–T1228 has biased composition (polar residues). Phosphoserine is present on S1235. T1239 carries the post-translational modification Phosphothreonine. Positions Q1251–A1268 are enriched in polar residues. Residues T1280 and T1302 each carry the phosphothreonine modification. Composition is skewed to low complexity over residues K1304–S1318 and T1347–S1359. Residues P1375–A1391 are compositionally biased toward polar residues. 2 positions are modified to phosphoserine: S1399 and S1400. K1402 carries the post-translational modification N6-acetyllysine. T1403 bears the Phosphothreonine mark. Residue K1413 forms a Glycyl lysine isopeptide (Lys-Gly) (interchain with G-Cter in SUMO1); alternate linkage. Residue K1413 forms a Glycyl lysine isopeptide (Lys-Gly) (interchain with G-Cter in SUMO2); alternate linkage. Polar residues-rich tracts occupy residues P1416–T1444, Q1456–R1475, A1498–T1514, and Q1538–A1555. 2 positions are modified to phosphothreonine: T1425 and T1466. T1548 carries the phosphothreonine modification. A Phosphoserine modification is found at S1564. A phosphothreonine mark is found at T1567 and T1589. Residues Q1579–A1596 show a composition bias toward polar residues. Residue S1604 is modified to Phosphoserine. The residue at position 1608 (T1608) is a Phosphothreonine. Residues P1611–H1620 are compositionally biased toward pro residues. The segment covering S1624–R1636 has biased composition (polar residues). Residues T1630, T1664, and T1671 each carry the phosphothreonine modification. Over residues G1678–V1689 the composition is skewed to polar residues. S1681 is modified (phosphoserine). Position 1697 is a phosphothreonine (T1697). The segment covering P1698–S1719 has biased composition (polar residues). The segment at P1698–T2089 is required for nuclear localization (NLS2). Phosphoserine is present on residues S1702 and S1711. K1740 participates in a covalent cross-link: Glycyl lysine isopeptide (Lys-Gly) (interchain with G-Cter in SUMO2). Position 1775 is a phosphoserine (S1775). K1790 participates in a covalent cross-link: Glycyl lysine isopeptide (Lys-Gly) (interchain with G-Cter in SUMO2). T1800 is subject to Phosphothreonine. Phosphoserine is present on S1820. Polar residues predominate over residues H1823 to T1836. Residue K1840 forms a Glycyl lysine isopeptide (Lys-Gly) (interchain with G-Cter in SUMO1); alternate linkage. A Glycyl lysine isopeptide (Lys-Gly) (interchain with G-Cter in SUMO2); alternate cross-link involves residue K1840. Basic and acidic residues predominate over residues A1847–V1857. T1858 carries the post-translational modification Phosphothreonine. BRCT domains lie at A1892–V1970 and R1991–S2082. Omega-N-methylarginine is present on R1943.

In terms of assembly, homodimer. Interacts with H2AX, which requires phosphorylation of H2AX on 'Ser-139'. Interacts with the MRN complex, composed of MRE11, RAD50, and NBN. Interacts with CHEK2, which requires ATM-mediated phosphorylation of 'Thr-68' within the FHA domain of CHEK2. Interacts constitutively with the BRCA1-BARD1 complex, SMC1A and TP53BP1. Interacts with ATM and FANCD2, and these interactions are reduced upon DNA damage. Also interacts with the PRKDC complex, composed of XRCC6/KU70, XRCC5/KU80 and PRKDC/XRCC7. This interaction may be required for PRKDC autophosphorylation, which is essential for DNA double strand break (DSB) repair. When phosphorylated by ATM, interacts with RNF8 (via FHA domain). Interacts with CEP164. When phosphorylated, interacts with APTX (via FHA-like domain). Interacts (when phosphorylated) with TOPBP1; promoting TOPBP1 localization to DNA damage sites during mitosis. Interacts (when phosphorylated) with NBN; promoting NBN and MRN complex localization to DNA damage sites. In terms of processing, phosphorylated upon exposure to ionizing radiation (IR), ultraviolet radiation (UV), and hydroxyurea (HU). Phosphorylation in response to IR requires ATM, NBN, and possibly CHEK2. Also phosphorylated during the G2/M phase of the cell cycle and during activation of the mitotic spindle checkpoint. Phosphorylation at Thr-4 by ATM stabilizes and enhances homodimerization via the FHA domain. Phosphorylated at Ser-168 and Ser-196 by CK2 in response to DNA damage during mitosis, promoting interaction with TOPBP1. Phosphorylated by CK2 in response to DNA damage, promoting interaction with NBN and recruitment of the MRN complex to DNA damage sites. Post-translationally, sumoylation at Lys-1840 by PIAS4 following DNA damage promotes ubiquitin-mediated degradation. Ubiquitinated by RNF4, leading to proteasomal degradation; undergoes 'Lys-48'-linked polyubiquitination. In terms of tissue distribution, highly expressed in testis.

The protein localises to the nucleus. The protein resides in the chromosome. Histone reader protein required for checkpoint-mediated cell cycle arrest in response to DNA damage within both the S phase and G2/M phases of the cell cycle. Specifically recognizes and binds histone H2AX phosphorylated at 'Ser-139', a marker of DNA damage, serving as a scaffold for the recruitment of DNA repair and signal transduction proteins to discrete foci of DNA damage sites. Also required for downstream events subsequent to the recruitment of these proteins. These include phosphorylation and activation of the ATM, CHEK1 and CHEK2 kinases, and stabilization of TP53/p53 and apoptosis. ATM and CHEK2 may also be activated independently by a parallel pathway mediated by TP53BP1. Required for chromosomal stability during mitosis by promoting recruitment of TOPBP1 to DNA double strand breaks (DSBs): TOPBP1 forms filamentous assemblies that bridge MDC1 and tether broken chromosomes during mitosis. Required for the repair of DSBs via homologous recombination by promoting recruitment of NBN component of the MRN complex to DSBs. This chain is Mediator of DNA damage checkpoint protein 1, found in Homo sapiens (Human).